Reading from the N-terminus, the 463-residue chain is Glutamate--tRNA ligase 2 (463 aa).

The short motif at 10–20 (PSPTGFLHIGS) is the 'HIGH' region element. A 'KMSKS' region motif is present at residues 239-243 (KLSKR). K242 contacts ATP.

This sequence belongs to the class-I aminoacyl-tRNA synthetase family. Glutamate--tRNA ligase type 1 subfamily. In terms of assembly, monomer.

It localises to the cytoplasm. It carries out the reaction tRNA(Glu) + L-glutamate + ATP = L-glutamyl-tRNA(Glu) + AMP + diphosphate. Its function is as follows. Catalyzes the attachment of glutamate to tRNA(Glu) in a two-step reaction: glutamate is first activated by ATP to form Glu-AMP and then transferred to the acceptor end of tRNA(Glu). The protein is Glutamate--tRNA ligase 2 of Rickettsia akari (strain Hartford).